The sequence spans 362 residues: Trans-enoyl reductase phm4 (362 aa).

50–53 (VDAK) serves as a coordination point for NADP(+). Position 136 to 143 (136 to 143 (TCFMTCGL)) interacts with substrate. NADP(+) contacts are provided by residues 171–174 (ATAT), 194–197 (SPHS), Tyr-212, and 259–260 (LD). 280–284 (GPIML) is a binding site for substrate. 349–350 (VN) lines the NADP(+) pocket.

The protein belongs to the zinc-containing alcohol dehydrogenase family. As to quaternary structure, monomer.

The protein operates within secondary metabolite biosynthesis. Its function is as follows. Trans-enoyl reductase; part of the gene cluster that mediates the biosynthesis of the trans-fused decalin-containing tetramic acid phomasetin, the stereochemical opposite of the HIV-1 integrase inhibitor equisetin. The PKS module of phm1 together with the enoylreductase phm4 catalyze the formation of the polyketide unit which is then conjugated to L-serine by the condensation domain of the phm1 NRPS module. Activity of the Dieckmann cyclase domain (RED) of phm1 results in release of the Dieckmann product intermediate. The Diels-Alderase phm7 then uses the Dieckmann product of phm1 as substrate and catalyzes the Diels-Alder cycloaddition to form the decalin ring of N-desmethylphomasetin. N-desmethylphomasetin is further methylated to phomasetin by the methyltransferase phm5. The chain is Trans-enoyl reductase phm4 from Pyrenochaetopsis sp.